Reading from the N-terminus, the 49-residue chain is Osteocalcin (49 aa).

Residues 1–47 (YLDHGLGAPAPYPDPLEPKREVCELNPDCDELADHIGFQEAYRRFYG) enclose the Gla domain. Pro-9 is modified (hydroxyproline). Positions 17, 21, 24, and 30 each coordinate Ca(2+). Glu-17, Glu-21, and Glu-24 each carry 4-carboxyglutamate. A disulfide bond links Cys-23 and Cys-29.

This sequence belongs to the osteocalcin/matrix Gla protein family. In terms of processing, gamma-carboxyglutamic acid residues are formed by vitamin K dependent carboxylation. These residues are essential for the binding of calcium.

It localises to the secreted. In terms of biological role, the carboxylated form is one of the main organic components of the bone matrix, which constitutes 1-2% of the total bone protein: it acts as a negative regulator of bone formation and is required to limit bone formation without impairing bone resorption or mineralization. The carboxylated form binds strongly to apatite and calcium. Functionally, the uncarboxylated form acts as a hormone secreted by osteoblasts, which regulates different cellular processes, such as energy metabolism, male fertility and brain development. Regulates of energy metabolism by acting as a hormone favoring pancreatic beta-cell proliferation, insulin secretion and sensitivity and energy expenditure. Uncarboxylated osteocalcin hormone also promotes testosterone production in the testes: acts as a ligand for G protein-coupled receptor GPRC6A at the surface of Leydig cells, initiating a signaling response that promotes the expression of enzymes required for testosterone synthesis in a CREB-dependent manner. Also acts as a regulator of brain development: osteocalcin hormone crosses the blood-brain barrier and acts as a ligand for GPR158 on neurons, initiating a signaling response that prevents neuronal apoptosis in the hippocampus, favors the synthesis of all monoamine neurotransmitters and inhibits that of gamma-aminobutyric acid (GABA). Osteocalcin also crosses the placenta during pregnancy and maternal osteocalcin is required for fetal brain development. The chain is Osteocalcin (BGLAP) from Bison priscus (Steppe wisent).